A 159-amino-acid polypeptide reads, in one-letter code: Phosphopantetheine adenylyltransferase (159 aa).

Thr10 is a substrate binding site. ATP contacts are provided by residues 10–11 and His18; that span reads TF. Residues Lys42, Met74, and Arg88 each contribute to the substrate site. ATP contacts are provided by residues 89-91, Glu99, and 124-130; these read GLR and WSFISSS.

Belongs to the bacterial CoaD family. As to quaternary structure, homohexamer. Requires Mg(2+) as cofactor.

It localises to the cytoplasm. The catalysed reaction is (R)-4'-phosphopantetheine + ATP + H(+) = 3'-dephospho-CoA + diphosphate. Its pathway is cofactor biosynthesis; coenzyme A biosynthesis; CoA from (R)-pantothenate: step 4/5. Functionally, reversibly transfers an adenylyl group from ATP to 4'-phosphopantetheine, yielding dephospho-CoA (dPCoA) and pyrophosphate. In Yersinia pseudotuberculosis serotype I (strain IP32953), this protein is Phosphopantetheine adenylyltransferase.